A 217-amino-acid polypeptide reads, in one-letter code: Ufm1-specific protease 1 (217 aa).

Active-site residues include Cys-53, Asp-175, and His-177.

It belongs to the peptidase C78 family. As to expression, widely expressed. Expressed at higher level in brain, heart, kidney and skeletal muscle.

It localises to the cytoplasm. The protein resides in the cytosol. Functionally, thiol-dependent isopeptidase that specifically mediate the processing of UFM1 precursors as well as the deconjugation of UFM1 from target proteins. Mainly responsible for the maturation of the UFM1 precursor, a prerequisite for conjugation reactions. This is Ufm1-specific protease 1 from Mus musculus (Mouse).